A 323-amino-acid polypeptide reads, in one-letter code: tRNA U34 carboxymethyltransferase (323 aa).

Carboxy-S-adenosyl-L-methionine contacts are provided by residues Lys91, Trp105, Lys110, Gly130, 180–181, Met196, Tyr200, and Arg315; that span reads IE.

The protein belongs to the class I-like SAM-binding methyltransferase superfamily. CmoB family. Homotetramer.

It catalyses the reaction carboxy-S-adenosyl-L-methionine + 5-hydroxyuridine(34) in tRNA = 5-carboxymethoxyuridine(34) in tRNA + S-adenosyl-L-homocysteine + H(+). Its function is as follows. Catalyzes carboxymethyl transfer from carboxy-S-adenosyl-L-methionine (Cx-SAM) to 5-hydroxyuridine (ho5U) to form 5-carboxymethoxyuridine (cmo5U) at position 34 in tRNAs. This chain is tRNA U34 carboxymethyltransferase, found in Citrifermentans bemidjiense (strain ATCC BAA-1014 / DSM 16622 / JCM 12645 / Bem) (Geobacter bemidjiensis).